We begin with the raw amino-acid sequence, 119 residues long: Ribosome-binding factor A (119 aa).

Belongs to the RbfA family. In terms of assembly, monomer. Binds 30S ribosomal subunits, but not 50S ribosomal subunits or 70S ribosomes.

It localises to the cytoplasm. One of several proteins that assist in the late maturation steps of the functional core of the 30S ribosomal subunit. Associates with free 30S ribosomal subunits (but not with 30S subunits that are part of 70S ribosomes or polysomes). Required for efficient processing of 16S rRNA. May interact with the 5'-terminal helix region of 16S rRNA. This Coxiella burnetii (strain CbuG_Q212) (Coxiella burnetii (strain Q212)) protein is Ribosome-binding factor A.